A 286-amino-acid polypeptide reads, in one-letter code: NAD kinase (286 aa).

Asp-74 serves as the catalytic Proton acceptor. NAD(+)-binding positions include 74 to 75 (DG), 148 to 149 (ND), Asp-178, Ala-186, 189 to 194 (TAYNLS), and Gln-244.

The protein belongs to the NAD kinase family. A divalent metal cation is required as a cofactor.

It localises to the cytoplasm. The catalysed reaction is NAD(+) + ATP = ADP + NADP(+) + H(+). Functionally, involved in the regulation of the intracellular balance of NAD and NADP, and is a key enzyme in the biosynthesis of NADP. Catalyzes specifically the phosphorylation on 2'-hydroxyl of the adenosine moiety of NAD to yield NADP. The sequence is that of NAD kinase from Campylobacter jejuni (strain RM1221).